The following is a 326-amino-acid chain: Adenosine receptor A1 (326 aa).

Residues 1 to 10 (MPPYISAFQA) lie on the Extracellular side of the membrane. A helical transmembrane segment spans residues 11–33 (AYIGIEVLIALVSVPGNVLVIWA). Residues 34–46 (VKVNQALRDATFC) lie on the Cytoplasmic side of the membrane. Residues 47-69 (FIVSLAVADVAVGALVIPLAILI) form a helical membrane-spanning segment. At 70–80 (NIGPQTYFHTC) the chain is on the extracellular side. A disulfide bond links cysteine 80 and cysteine 169. The helical transmembrane segment at 81-102 (LMVACPVLILTQSSILALLAIA) threads the bilayer. The Cytoplasmic segment spans residues 103 to 123 (VDRYLRVKIPLRYKTVVTQRR). Residues 124 to 146 (AAVAIAGCWILSLVVGLTPMFGW) traverse the membrane as a helical segment. Topologically, residues 147–176 (NNLSVVEQDWRANGSVGEPVIKCEFEKVIS) are extracellular. Residues asparagine 148 and asparagine 159 are each glycosylated (N-linked (GlcNAc...) asparagine). The chain crosses the membrane as a helical span at residues 177–201 (MEYMVYFNFFVWVLPPLLLMVLIYL). Residues 202 to 235 (EVFYLIRKQLNKKVSASSGDPQKYYGKELKIAKS) are Cytoplasmic-facing. A helical transmembrane segment spans residues 236 to 259 (LALILFLFALSWLPLHILNCITLF). The Extracellular segment spans residues 260–267 (CPTCQKPS). The chain crosses the membrane as a helical span at residues 268–292 (ILIYIAIFLTHGNSAMNPIVYAFRI). Topologically, residues 293–326 (HKFRVTFLKIWNDHFRCQPKPPIDEDLPEEKAED) are cytoplasmic. Residue cysteine 309 is the site of S-palmitoyl cysteine attachment.

Belongs to the G-protein coupled receptor 1 family. As to expression, widely expressed in brain and spinal cord.

It is found in the cell membrane. Receptor for adenosine. The activity of this receptor is mediated by G proteins which inhibit adenylyl cyclase. This is Adenosine receptor A1 (Adora1) from Rattus norvegicus (Rat).